Reading from the N-terminus, the 91-residue chain is Small ribosomal subunit protein uS19 (91 aa).

This sequence belongs to the universal ribosomal protein uS19 family.

Functionally, protein S19 forms a complex with S13 that binds strongly to the 16S ribosomal RNA. The chain is Small ribosomal subunit protein uS19 from Prochlorococcus marinus (strain MIT 9303).